A 159-amino-acid chain; its full sequence is Ribosome maturation factor RimP (159 aa).

This sequence belongs to the RimP family.

The protein localises to the cytoplasm. Functionally, required for maturation of 30S ribosomal subunits. The chain is Ribosome maturation factor RimP from Streptococcus pneumoniae serotype 19F (strain G54).